The sequence spans 402 residues: Triose phosphate/phosphate translocator, non-green plastid, chloroplastic (402 aa).

The transit peptide at 1–82 (MQSSAVFSAS…SLDTNRFKTA (82 aa)) directs the protein to the chloroplast. The Chloroplast intermembrane portion of the chain corresponds to 83-98 (ATAVPEEGEGSGKMTK). Residues 99–119 (VLELGLLFAMWYLFNIYFNIY) form a helical membrane-spanning segment. One can recognise an EamA domain in the interval 118 to 236 (IYNKQVLKAL…IVGGVALASV (119 aa)). Topologically, residues 120 to 131 (NKQVLKALHAPM) are lumenal. The helical transmembrane segment at 132 to 152 (TVTLVQFAVGSVLITFMWALN) threads the bilayer. Residues 153–209 (LYKRPKISAAQLAAILPLAVVHTLGNLFTNMSLGKVSVSFTHTIKAMEPFFSVVLSA) are Chloroplast intermembrane-facing. A helical membrane pass occupies residues 210–230 (MFLGEVPTPWVIGSIIPIVGG). The Lumenal segment spans residues 231–278 (VALASVTEVSFNWAGFLSAMASNLTNQSRNVLSKKVMVKKDDSLDNIT). Residues 279-298 (LFSIITLMSLFLMAPVTFFS) traverse the membrane as a helical segment. The Chloroplast intermembrane portion of the chain corresponds to 299-374 (EGIKFTPSYI…IFFKTPVSPV (76 aa)). Residues 375–394 (NAFGTGIALAGVFLYSRVKR) traverse the membrane as a helical segment. Residues 395-402 (IKPKPKTA) lie on the Lumenal side of the membrane.

Belongs to the TPT transporter family. TPT (TC 2.A.7.9) subfamily. As to quaternary structure, homodimer.

It is found in the plastid. The protein localises to the chloroplast membrane. Functionally, mediates the export of fixed carbons from the chloroplasts into the cytosol in the form of triose phosphates. The sequence is that of Triose phosphate/phosphate translocator, non-green plastid, chloroplastic (NGTPT) from Brassica oleracea var. botrytis (Cauliflower).